The sequence spans 714 residues: DNA ligase (714 aa).

NAD(+) is bound by residues 59–63, 108–109, and Glu-139; these read DYEYD and SL. Lys-141 acts as the N6-AMP-lysine intermediate in catalysis. NAD(+) is bound by residues Arg-162, Glu-200, Lys-325, and Lys-349. Zn(2+) is bound by residues Cys-443, Cys-446, Cys-461, and Cys-466. The BRCT domain maps to 624 to 713; the sequence is VVENIFEGKT…IPDDLKDKVH (90 aa).

It belongs to the NAD-dependent DNA ligase family. LigA subfamily. Mg(2+) is required as a cofactor. The cofactor is Mn(2+).

The enzyme catalyses NAD(+) + (deoxyribonucleotide)n-3'-hydroxyl + 5'-phospho-(deoxyribonucleotide)m = (deoxyribonucleotide)n+m + AMP + beta-nicotinamide D-nucleotide.. Functionally, DNA ligase that catalyzes the formation of phosphodiester linkages between 5'-phosphoryl and 3'-hydroxyl groups in double-stranded DNA using NAD as a coenzyme and as the energy source for the reaction. It is essential for DNA replication and repair of damaged DNA. The sequence is that of DNA ligase from Persephonella marina (strain DSM 14350 / EX-H1).